A 713-amino-acid polypeptide reads, in one-letter code: MSDTTLSEATSNTASHSLAEKRKILVTCALPYANGSIHLGHMLEHIQTDIWVRFQRMRGHETYFVCADDAHGTPIMLKAQELGITPEEMINGVREERIKEFSDFHISFDNYHTTHSDENKEYSEKIYNALHAKGHIKTRIISQLYDPEKGMFLADRFVKGTCPKCKSEDENGDSCDNCGATYSPTEVLNPRSAISGATPILKDSEHYFFDLPAFETMLSDWIRSGALQEEVANKLTEWFEQGLKQWDISRDAPYFGFEIPNAPGKFFYVWLDAPIGYMGSFKNLCDKDSTIDFDSFWNKNSDAELYHFIGKDIINFHSLFWPAMLEGADFRKPTAVFAHGFVTVNGEKMSKSKGTFIKGRTYLDHLNPEYLRYYYATKLTHKIDDLDLNLEDFVQRVNSDLVGKVVNIASRCASFITKRFDGMLSTNIDDQALADEVMAAGDSIAAHYESRDFGRGMREIMALADKVNEYIAIKEPWQLVKDETKQQEVQDICSLGINMFRTLMIYLKPVLPVLADSTAAFLNDELVWEGHKTLLTDHKINKFKALLQRVDMDKVNAMTDASKDSLGAPVEEEKKPAKKKKAAKVVDNSAALADPLAADPISEEIEFDDFAKIDLRIVKIINAEHVEKADKLIQLTLALNEEGTETRQVFAGIKSAYNPEDLIGKHTVMVANLAPRKMRFGMSEGMVLAAGPGDKDLWILNPDDGAKAGMRVK.

Residues Pro31–His41 carry the 'HIGH' region motif. 4 residues coordinate Zn(2+): Cys162, Cys165, Cys175, and Cys178. Positions Lys348 to Ser352 match the 'KMSKS' region motif. Lys351 provides a ligand contact to ATP. Residues Asp609 to Lys713 form the tRNA-binding domain.

The protein belongs to the class-I aminoacyl-tRNA synthetase family. MetG type 1 subfamily. Homodimer. The cofactor is Zn(2+).

The protein localises to the cytoplasm. It catalyses the reaction tRNA(Met) + L-methionine + ATP = L-methionyl-tRNA(Met) + AMP + diphosphate. Is required not only for elongation of protein synthesis but also for the initiation of all mRNA translation through initiator tRNA(fMet) aminoacylation. The sequence is that of Methionine--tRNA ligase from Colwellia psychrerythraea (strain 34H / ATCC BAA-681) (Vibrio psychroerythus).